The following is a 235-amino-acid chain: Sugar fermentation stimulation protein homolog (235 aa).

This sequence belongs to the SfsA family.

The polypeptide is Sugar fermentation stimulation protein homolog (Aliivibrio fischeri (strain ATCC 700601 / ES114) (Vibrio fischeri)).